Here is a 134-residue protein sequence, read N- to C-terminus: Small ribosomal subunit protein uS12 (134 aa).

Asp-89 carries the 3-methylthioaspartic acid modification. The segment at 109 to 134 (KRNVSRSKYGAKKGKAGAAPTTGKKK) is disordered. A compositionally biased stretch (basic residues) spans 111–123 (NVSRSKYGAKKGK). Residues 124–134 (AGAAPTTGKKK) are compositionally biased toward low complexity.

The protein belongs to the universal ribosomal protein uS12 family. As to quaternary structure, part of the 30S ribosomal subunit. Contacts proteins S8 and S17. May interact with IF1 in the 30S initiation complex.

In terms of biological role, with S4 and S5 plays an important role in translational accuracy. Functionally, interacts with and stabilizes bases of the 16S rRNA that are involved in tRNA selection in the A site and with the mRNA backbone. Located at the interface of the 30S and 50S subunits, it traverses the body of the 30S subunit contacting proteins on the other side and probably holding the rRNA structure together. The combined cluster of proteins S8, S12 and S17 appears to hold together the shoulder and platform of the 30S subunit. The chain is Small ribosomal subunit protein uS12 from Wolinella succinogenes (strain ATCC 29543 / DSM 1740 / CCUG 13145 / JCM 31913 / LMG 7466 / NCTC 11488 / FDC 602W) (Vibrio succinogenes).